Here is a 334-residue protein sequence, read N- to C-terminus: Heat-inducible transcription repressor HrcA (334 aa).

This sequence belongs to the HrcA family.

Its function is as follows. Negative regulator of class I heat shock genes (grpE-dnaK-dnaJ and groELS operons). Prevents heat-shock induction of these operons. The protein is Heat-inducible transcription repressor HrcA of Verminephrobacter eiseniae (strain EF01-2).